A 166-amino-acid polypeptide reads, in one-letter code: Phosphopantetheine adenylyltransferase (166 aa).

Position 11 (Thr11) interacts with substrate. Residues 11–12 (TF) and His19 contribute to the ATP site. Substrate contacts are provided by Lys43, Thr79, and Arg93. Residues Glu104 and 128–134 (LEPLNST) contribute to the ATP site.

The protein belongs to the bacterial CoaD family. In terms of assembly, homohexamer. Mg(2+) serves as cofactor.

Its subcellular location is the cytoplasm. The catalysed reaction is (R)-4'-phosphopantetheine + ATP + H(+) = 3'-dephospho-CoA + diphosphate. The protein operates within cofactor biosynthesis; coenzyme A biosynthesis; CoA from (R)-pantothenate: step 4/5. Its function is as follows. Reversibly transfers an adenylyl group from ATP to 4'-phosphopantetheine, yielding dephospho-CoA (dPCoA) and pyrophosphate. This Lactococcus lactis subsp. cremoris (strain MG1363) protein is Phosphopantetheine adenylyltransferase.